The following is a 481-amino-acid chain: UDP-N-acetylmuramoyl-L-alanyl-D-glutamate--L-lysine ligase (481 aa).

Serine 42 contacts UDP-N-acetyl-alpha-D-muramoyl-L-alanyl-D-glutamate. 118 to 124 (GTKGKTT) contacts ATP. Residues 160-161 (TT), serine 187, and arginine 195 each bind UDP-N-acetyl-alpha-D-muramoyl-L-alanyl-D-glutamate. Lysine 229 carries the N6-carboxylysine modification. The L-lysine recognition motif signature appears at 404–407 (DDPN).

Belongs to the MurCDEF family. MurE subfamily. Post-translationally, carboxylation is probably crucial for Mg(2+) binding and, consequently, for the gamma-phosphate positioning of ATP.

Its subcellular location is the cytoplasm. The catalysed reaction is UDP-N-acetyl-alpha-D-muramoyl-L-alanyl-D-glutamate + L-lysine + ATP = UDP-N-acetyl-alpha-D-muramoyl-L-alanyl-gamma-D-glutamyl-L-lysine + ADP + phosphate + H(+). The protein operates within cell wall biogenesis; peptidoglycan biosynthesis. Functionally, catalyzes the addition of L-lysine to the nucleotide precursor UDP-N-acetylmuramoyl-L-alanyl-D-glutamate (UMAG) in the biosynthesis of bacterial cell-wall peptidoglycan. This chain is UDP-N-acetylmuramoyl-L-alanyl-D-glutamate--L-lysine ligase, found in Streptococcus pneumoniae (strain ATCC BAA-255 / R6).